Consider the following 290-residue polypeptide: ATP synthase gamma chain (290 aa).

It belongs to the ATPase gamma chain family. As to quaternary structure, F-type ATPases have 2 components, CF(1) - the catalytic core - and CF(0) - the membrane proton channel. CF(1) has five subunits: alpha(3), beta(3), gamma(1), delta(1), epsilon(1). CF(0) has three main subunits: a, b and c.

It is found in the cell inner membrane. In terms of biological role, produces ATP from ADP in the presence of a proton gradient across the membrane. The gamma chain is believed to be important in regulating ATPase activity and the flow of protons through the CF(0) complex. The sequence is that of ATP synthase gamma chain from Bacteroides fragilis (strain ATCC 25285 / DSM 2151 / CCUG 4856 / JCM 11019 / LMG 10263 / NCTC 9343 / Onslow / VPI 2553 / EN-2).